The chain runs to 418 residues: Serine--tRNA ligase (418 aa).

228-230 (TSE) serves as a coordination point for L-serine. ATP contacts are provided by residues 258 to 260 (RKE) and V274. E281 lines the L-serine pocket. 345–348 (EVVS) is an ATP binding site. T381 provides a ligand contact to L-serine.

The protein belongs to the class-II aminoacyl-tRNA synthetase family. Type-1 seryl-tRNA synthetase subfamily. As to quaternary structure, homodimer. The tRNA molecule binds across the dimer.

The protein resides in the cytoplasm. It carries out the reaction tRNA(Ser) + L-serine + ATP = L-seryl-tRNA(Ser) + AMP + diphosphate + H(+). The catalysed reaction is tRNA(Sec) + L-serine + ATP = L-seryl-tRNA(Sec) + AMP + diphosphate + H(+). It functions in the pathway aminoacyl-tRNA biosynthesis; selenocysteinyl-tRNA(Sec) biosynthesis; L-seryl-tRNA(Sec) from L-serine and tRNA(Sec): step 1/1. In terms of biological role, catalyzes the attachment of serine to tRNA(Ser). Is also able to aminoacylate tRNA(Sec) with serine, to form the misacylated tRNA L-seryl-tRNA(Sec), which will be further converted into selenocysteinyl-tRNA(Sec). In Cenarchaeum symbiosum (strain A), this protein is Serine--tRNA ligase.